Here is a 165-residue protein sequence, read N- to C-terminus: Myosin regulatory light chain 2A, cardiac muscle isoform (165 aa).

At Ala-2 the chain carries N,N,N-trimethylalanine. 3 EF-hand domains span residues 24–59 (AQIQEFKEAFTIMDQNRDGFIDKADLRDTFAALGRL), 94–128 (DPEETILNAFKVFDPEGKGLKSAYIKEMLMTQEGR), and 129–164 (FSQEEIDQMFAAFPPDVSGNLDYKNLVHVITHGEEK). Ca(2+) is bound by residues Asp-37, Asn-39, Asp-41, and Asp-48.

In terms of assembly, myosin is a hexamer of 2 heavy chains and 4 light chains. Post-translationally, the N-terminus is blocked. N,N,N-trimethylalanine, found in other myosin light chains would not have been detected in the N-terminal tryptic peptide in PubMed:7319048 because it would remain trimethylated and ninhydrin negative after hydrolysis.

In Gallus gallus (Chicken), this protein is Myosin regulatory light chain 2A, cardiac muscle isoform.